A 550-amino-acid polypeptide reads, in one-letter code: (S)-beta-bisabolene synthase (550 aa).

Residues aspartate 303, aspartate 307, serine 451, and glutamate 455 each contribute to the Mg(2+) site. Positions aspartate 303–aspartate 307 match the DDXXD motif motif.

This sequence belongs to the terpene synthase family. Tpsa subfamily. Requires Mg(2+) as cofactor. It depends on Mn(2+) as a cofactor. Expressed only in young rhizomes. Not detected in leaves, roots and mature rhizomes.

It catalyses the reaction (2E,6E)-farnesyl diphosphate = (S)-beta-bisabolene + diphosphate. Its function is as follows. Sesquiterpene synthase involved in the biosynthesis of bisabolene. The polypeptide is (S)-beta-bisabolene synthase (TPS1) (Zingiber officinale (Ginger)).